We begin with the raw amino-acid sequence, 527 residues long: Cytochrome P450 monooygenase 3 (527 aa).

Residues 21-41 traverse the membrane as a helical segment; that stretch reads IAVAFAALCGATGLLAFSWWI. Cysteine 473 contributes to the heme binding site.

The protein belongs to the cytochrome P450 family. It depends on heme as a cofactor.

It is found in the membrane. It participates in plant hormone biosynthesis; gibberellin biosynthesis. Functionally, gibberellin 13-hydroxylase; part of the gene cluster that mediates the biosynthesis of gibberellins (GAs), diterpenoids that may provide a selective advantage during infection of the preferred host plant, rice. Gibberellins (GAs) are diterpenoids and are synthesized via the mevalonate pathway. Biosynthesis of the major metabolite GA3 (gibberellic acid) from geranylgeranyl diphosphate (GGPP) requires 13 steps. The GGPP produced by the geranylgeranyl diphosphate synthase GGS2 is converted to ent-kaurene via ent-copalyldiphosphate in a two-step cyclization reaction performed by the bifunctional ent-copalyl diphosphate synthase/ent-kaurene synthase enzyme (CPS/KS). Ent-Kaurene is metabolized to GAs by a series of oxidation reactions catalyzed by cytochrome P450 monooxygenases. Cytochrome P450 monooxygenase P450-4 is an ent-kaurene oxidase that catalyzes the three oxidation steps between ent-kaurene and ent-kaurenoic acid. The highly multifunctional cytochrome P450 monooxygenase P450-1 then catalyzes four steps involving oxidation at two carbon atoms, in the main pathway from ent-kaurenoic acid to GA14 via GA12-aldehyde as well as producing kaurenolides and fujenoic acids as by-products. The cytochrome P450 monooxygenase P450-2 then converts GA14 to GA4 by removal of C-20. GA4 is further converted to GA7 by the GA4 desaturase DES via 1,2-desaturation before cytochrome P450 monooxygenase P450-3, a 13-hydroxylase, hydroxylates GA7 to GA3, the final product of the GA-biosynthetic pathway. The chain is Cytochrome P450 monooygenase 3 from Gibberella fujikuroi (strain CBS 195.34 / IMI 58289 / NRRL A-6831) (Bakanae and foot rot disease fungus).